Here is a 73-residue protein sequence, read N- to C-terminus: NADH dehydrogenase [ubiquinone] 1 beta subcomplex subunit 3-B (73 aa).

The helical transmembrane segment at 31-48 (ALPGLGIGVAAFCVYLVG) threads the bilayer.

Belongs to the complex I NDUFB3 subunit family. Complex I is composed of at least 49 different subunits.

It is found in the mitochondrion inner membrane. In terms of biological role, accessory subunit of the mitochondrial membrane respiratory chain NADH dehydrogenase (Complex I), that is believed not to be involved in catalysis. Complex I functions in the transfer of electrons from NADH to the respiratory chain. The immediate electron acceptor for the enzyme is believed to be ubiquinone. The chain is NADH dehydrogenase [ubiquinone] 1 beta subcomplex subunit 3-B from Arabidopsis thaliana (Mouse-ear cress).